Here is a 316-residue protein sequence, read N- to C-terminus: NAD kinase 1 (316 aa).

Catalysis depends on aspartate 67, which acts as the Proton acceptor. NAD(+) is bound at residue 67–68; that stretch reads DG. The interval 132–151 is disordered; it reads RSAEERADAPTPLQQPDVED. NAD(+) contacts are provided by residues 160-161, arginine 190, and aspartate 192; that span reads ND.

Belongs to the NAD kinase family. Requires a divalent metal cation as cofactor.

Its subcellular location is the cytoplasm. It catalyses the reaction NAD(+) + ATP = ADP + NADP(+) + H(+). Its function is as follows. Involved in the regulation of the intracellular balance of NAD and NADP, and is a key enzyme in the biosynthesis of NADP. Catalyzes specifically the phosphorylation on 2'-hydroxyl of the adenosine moiety of NAD to yield NADP. The chain is NAD kinase 1 from Parasynechococcus marenigrum (strain WH8102).